We begin with the raw amino-acid sequence, 1039 residues long: Translation initiation factor IF-2 (1039 aa).

Disordered regions lie at residues 39-347 (TISE…KWQE) and 400-452 (ARPP…PEKV). The segment covering 103–125 (RNTTSNAPEASVANNQIASSEAN) has biased composition (polar residues). Residues 157-176 (PQKPAAPEAEPEAQSQAPAK) are compositionally biased toward low complexity. 2 stretches are compositionally biased toward basic and acidic residues: residues 178-197 (AVEK…ERQP) and 226-243 (PILK…DQAK). The span at 408 to 423 (ARSASAATAAPISSPT) shows a compositional bias: low complexity. The span at 432-451 (NNRDQNRRQETEVKRERPEK) shows a compositional bias: basic and acidic residues. Positions 533–706 (RRPPVVTIMG…LLVAEVGELS (174 aa)) constitute a tr-type G domain. Positions 542-549 (GHVDHGKT) are G1. A GTP-binding site is contributed by 542–549 (GHVDHGKT). A G2 region spans residues 567-571 (GITQH). Positions 592 to 595 (DTPG) are G3. GTP is bound by residues 592–596 (DTPGH) and 646–649 (NKID). Residues 646-649 (NKID) form a G4 region. The interval 682–684 (SAI) is G5.

The protein belongs to the TRAFAC class translation factor GTPase superfamily. Classic translation factor GTPase family. IF-2 subfamily.

The protein localises to the cytoplasm. One of the essential components for the initiation of protein synthesis. Protects formylmethionyl-tRNA from spontaneous hydrolysis and promotes its binding to the 30S ribosomal subunits. Also involved in the hydrolysis of GTP during the formation of the 70S ribosomal complex. This chain is Translation initiation factor IF-2, found in Nostoc sp. (strain PCC 7120 / SAG 25.82 / UTEX 2576).